A 198-amino-acid chain; its full sequence is HTH-type transcriptional regulator BetI (198 aa).

The 61-residue stretch at 8–68 folds into the HTH tetR-type domain; that stretch reads PLRRRELIDA…ATMRHLLREL (61 aa). The H-T-H motif DNA-binding region spans 31-50; that stretch reads TVAQIAHEAGVSPALAHHYF.

Its pathway is amine and polyamine biosynthesis; betaine biosynthesis via choline pathway [regulation]. Functionally, repressor involved in the biosynthesis of the osmoprotectant glycine betaine. It represses transcription of the choline transporter BetT and the genes of BetAB involved in the synthesis of glycine betaine. The polypeptide is HTH-type transcriptional regulator BetI (Brucella canis (strain ATCC 23365 / NCTC 10854 / RM-666)).